The chain runs to 512 residues: GTPase Obg (512 aa).

The Obg domain occupies 2-159; sequence ATFVDTVTLH…GDVVLELKVV (158 aa). One can recognise an OBG-type G domain in the interval 160–336; sequence ADVALVGYPS…LSFALAELVE (177 aa). GTP contacts are provided by residues 166–173, 191–195, 212–215, 288–291, and 317–319; these read GYPSAGKS, FTTLH, DVPG, NKID, and STV. Mg(2+) contacts are provided by Ser173 and Thr193. The OCT domain maps to 355–439; the sequence is PRAVNEKPFT…GDGIVFDWEP (85 aa). The disordered stretch occupies residues 491 to 512; it reads GEAGLWADEDGTDEDASSDAKA. Positions 497–512 are enriched in acidic residues; sequence ADEDGTDEDASSDAKA.

This sequence belongs to the TRAFAC class OBG-HflX-like GTPase superfamily. OBG GTPase family. Monomer. Mg(2+) serves as cofactor.

The protein localises to the cytoplasm. Its function is as follows. An essential GTPase which binds GTP, GDP and possibly (p)ppGpp with moderate affinity, with high nucleotide exchange rates and a fairly low GTP hydrolysis rate. Plays a role in control of the cell cycle, stress response, ribosome biogenesis and in those bacteria that undergo differentiation, in morphogenesis control. The sequence is that of GTPase Obg from Clavibacter michiganensis subsp. michiganensis (strain NCPPB 382).